The following is a 64-amino-acid chain: DNA gyrase inhibitor YacG (64 aa).

Positions 9, 12, 28, and 32 each coordinate Zn(2+).

It belongs to the DNA gyrase inhibitor YacG family. Interacts with GyrB. Zn(2+) is required as a cofactor.

Inhibits all the catalytic activities of DNA gyrase by preventing its interaction with DNA. Acts by binding directly to the C-terminal domain of GyrB, which probably disrupts DNA binding by the gyrase. This Enterobacter sp. (strain 638) protein is DNA gyrase inhibitor YacG.